The following is a 364-amino-acid chain: Isoflavone 4'-O-methyltransferase (364 aa).

Residues 206–209 (VGGG), Asp-230, 230–231 (DQ), 250–251 (DM), and Lys-264 each bind S-adenosyl-L-methionine. Residue His-268 is the Proton acceptor of the active site.

It belongs to the class I-like SAM-binding methyltransferase superfamily. Cation-independent O-methyltransferase family. COMT subfamily. In terms of assembly, homodimer.

It carries out the reaction a 4'-hydroxyisoflavone + S-adenosyl-L-methionine = a 4'-methoxyisoflavone + S-adenosyl-L-homocysteine + H(+). The catalysed reaction is (2R,3S)-2,4',7-trihydroxyisoflavanone + S-adenosyl-L-methionine = (2R,3S)-2,7-dihydroxy-4'-methoxyisoflavanone + S-adenosyl-L-homocysteine + H(+). Functionally, 2-hydroxyisoflavanone 4'-O-methyltransferase involved in the biosynthesis of the phytoalexin medicarpin. Has also an in vitro (+)-6a-hydroxymaackiain-3-0-methyltransferase activity, converting the pterocarpan 6a-hydroxymaackiain into pisatin. No activity with di- or trihydroxylated isoflavones, including daidzein and genistein, or with (-)-medicarpin and maackiain. The dual activity for either 3- or 4'-O-methylation depends upon substrate availability. This is Isoflavone 4'-O-methyltransferase (HI4'OMT) from Medicago truncatula (Barrel medic).